Reading from the N-terminus, the 394-residue chain is RHOMBOID-like protein 4 (394 aa).

The segment at Met-1 to Tyr-51 is disordered. Positions Gly-39–Ser-49 are enriched in polar residues. 7 helical membrane passes run Trp-64 to Met-84, Trp-147 to Ile-167, Phe-175 to Leu-195, Ile-201 to Phe-221, Val-231 to Pro-251, Asp-254 to Ile-274, and Ile-300 to Leu-320. Residue Ser-206 is the Nucleophile of the active site. The active-site Charge relay system is His-258.

The protein belongs to the peptidase S54 family.

The protein localises to the membrane. The catalysed reaction is Cleaves type-1 transmembrane domains using a catalytic dyad composed of serine and histidine that are contributed by different transmembrane domains.. Probable rhomboid-type serine protease that catalyzes intramembrane proteolysis. The sequence is that of RHOMBOID-like protein 4 from Arabidopsis thaliana (Mouse-ear cress).